Consider the following 489-residue polypeptide: Ketol-acid reductoisomerase (NADP(+)) (489 aa).

The KARI N-terminal Rossmann domain maps to 17–208; it reads LGVCEFMEQS…GGHKAGVLRS (192 aa). NADP(+)-binding positions include 45–48, Arg68, Arg76, Ser78, and 108–110; these read CGAQ and DKQ. The active site involves His132. NADP(+) is bound at residue Gly158. 2 KARI C-terminal knotted domains span residues 209–344 and 345–485; these read SFVA…KTAP and QEAP…MTAM. 4 residues coordinate Mg(2+): Asp217, Glu221, Glu389, and Glu393. Ser414 is a binding site for substrate.

Belongs to the ketol-acid reductoisomerase family. The cofactor is Mg(2+).

It catalyses the reaction (2R)-2,3-dihydroxy-3-methylbutanoate + NADP(+) = (2S)-2-acetolactate + NADPH + H(+). The catalysed reaction is (2R,3R)-2,3-dihydroxy-3-methylpentanoate + NADP(+) = (S)-2-ethyl-2-hydroxy-3-oxobutanoate + NADPH + H(+). It participates in amino-acid biosynthesis; L-isoleucine biosynthesis; L-isoleucine from 2-oxobutanoate: step 2/4. It functions in the pathway amino-acid biosynthesis; L-valine biosynthesis; L-valine from pyruvate: step 2/4. In terms of biological role, involved in the biosynthesis of branched-chain amino acids (BCAA). Catalyzes an alkyl-migration followed by a ketol-acid reduction of (S)-2-acetolactate (S2AL) to yield (R)-2,3-dihydroxy-isovalerate. In the isomerase reaction, S2AL is rearranged via a Mg-dependent methyl migration to produce 3-hydroxy-3-methyl-2-ketobutyrate (HMKB). In the reductase reaction, this 2-ketoacid undergoes a metal-dependent reduction by NADPH to yield (R)-2,3-dihydroxy-isovalerate. This chain is Ketol-acid reductoisomerase (NADP(+)), found in Flavobacterium johnsoniae (strain ATCC 17061 / DSM 2064 / JCM 8514 / BCRC 14874 / CCUG 350202 / NBRC 14942 / NCIMB 11054 / UW101) (Cytophaga johnsonae).